Reading from the N-terminus, the 513-residue chain is Sulfhydryl oxidase 1 (513 aa).

Positions 1-30 (MAAAAVARRVVLVLVLAAASLAAAPRGAAA) are cleaved as a signal peptide. The 144-residue stretch at 31 to 174 (RSLGGREGPG…LLKWINNQMK (144 aa)) folds into the Thioredoxin domain. Asparagine 51 carries N-linked (GlcNAc...) asparagine glycosylation. Catalysis depends on nucleophile residues cysteine 76 and cysteine 79. A disulfide bond links cysteine 76 and cysteine 79. N-linked (GlcNAc...) asparagine glycans are attached at residues asparagine 193 and asparagine 266. A disulfide bond links cysteine 301 and cysteine 313. Residues 304–406 (SKSETRGFSC…GDPLFPKVTW (103 aa)) form the ERV/ALR sulfhydryl oxidase domain. FAD contacts are provided by residues arginine 309, tryptophan 316, histidine 320, glutamate 350, histidine 354, 377 to 384 (WSTHNKVN), lysine 403, and tryptophan 406. Cysteine 348 and cysteine 351 are oxidised to a cystine. Cysteine 412 and cysteine 415 are disulfide-bonded.

FAD is required as a cofactor.

The protein resides in the secreted. It catalyses the reaction 2 R'C(R)SH + O2 = R'C(R)S-S(R)CR' + H2O2. Catalyzes the oxidation of sulfhydryl groups in peptide and protein thiols to disulfides with the reduction of oxygen to hydrogen peroxide. May contribute to disulfide bond formation in a variety of secreted proteins. The sequence is that of Sulfhydryl oxidase 1 (QSOX1) from Oryza sativa subsp. japonica (Rice).